Here is a 619-residue protein sequence, read N- to C-terminus: Probable galacturonosyltransferase 7 (619 aa).

Topologically, residues 1–19 (MKGGGGGGGGGGGGKRRWK) are cytoplasmic. Residues 20–40 (VLVIGVLVLVILSMLVPLAFL) form a helical; Signal-anchor for type II membrane protein membrane-spanning segment. Residues 41-619 (LGLHNGFHSP…RFLSDCNVNP (579 aa)) are Lumenal-facing. Asn-68, Asn-106, Asn-132, Asn-343, and Asn-421 each carry an N-linked (GlcNAc...) asparagine glycan. The segment at 95 to 139 (KSDINVGSRDVNATSGTDSKKRGLPVSPTVVANPSPANKTKSEAS) is disordered. A compositionally biased stretch (polar residues) spans 124 to 139 (VVANPSPANKTKSEAS).

It belongs to the glycosyltransferase 8 family. As to expression, expressed in roots, inflorescences, flowers, siliques, leaves and stems.

It is found in the golgi apparatus membrane. The protein operates within glycan metabolism; pectin biosynthesis. Functionally, may be involved in pectin biosynthesis. The polypeptide is Probable galacturonosyltransferase 7 (GAUT7) (Arabidopsis thaliana (Mouse-ear cress)).